Here is a 267-residue protein sequence, read N- to C-terminus: Trehalose-phosphate phosphatase (267 aa).

Aspartate 20 functions as the Nucleophile in the catalytic mechanism. 3 residues coordinate Mg(2+): aspartate 20, aspartate 22, and aspartate 198. Position 20–22 (20–22 (DLD)) interacts with substrate.

Belongs to the trehalose phosphatase family. The cofactor is Mg(2+).

The catalysed reaction is alpha,alpha-trehalose 6-phosphate + H2O = alpha,alpha-trehalose + phosphate. It functions in the pathway glycan biosynthesis; trehalose biosynthesis. Its function is as follows. Removes the phosphate from trehalose 6-phosphate to produce free trehalose. The sequence is that of Trehalose-phosphate phosphatase (otsB) from Salmonella typhimurium (strain LT2 / SGSC1412 / ATCC 700720).